The sequence spans 710 residues: Denticleless protein homolog A (710 aa).

WD repeat units lie at residues 47 to 89, 96 to 135, and 138 to 178; these read GMPV…MQRL, AHTN…LIGE, and GHQC…KDGF. The DDB1-binding motif motif lies at 168 to 171; it reads WDTR. Residues 197-204 carry the Nuclear localization signal motif; the sequence is PSKMKKRK. WD repeat units lie at residues 215-254, 270-309, 314-355, and 359-398; these read DSQQ…SAYR, TRKL…TDPV, GHQN…AAPV, and GHCQ…CEDS. Positions 244–247 match the DDB1-binding motif motif; it reads WDLR. Disordered stretches follow at residues 428–534 and 652–698; these read GKPS…VSSA and ALGH…PGSM. Over residues 430-450 the composition is skewed to low complexity; that stretch reads PSVMSSSSLTSSPTPASCAPS. 2 stretches are compositionally biased toward polar residues: residues 504–516 and 659–690; these read TPKS…TKTP and SSPQ…SPVS.

The protein belongs to the WD repeat cdt2 family. Component of the DCX(DTL) E3 ubiquitin ligase complex, at least composed of cul4 (cul4a or cul4b), ddb1, dtl/cdt2 and rbx1.

It is found in the nucleus. Its subcellular location is the cytoplasm. It localises to the cytoskeleton. The protein resides in the microtubule organizing center. The protein localises to the centrosome. It is found in the chromosome. It participates in protein modification; protein ubiquitination. Substrate-specific adapter of a DCX (DDB1-CUL4-X-box) E3 ubiquitin-protein ligase complex required for cell cycle control, DNA damage response and translesion DNA synthesis. The DCX(DTL) complex, also named CRL4(CDT2) complex, mediates the polyubiquitination and subsequent degradation of CDT1, CDKN1A/p21(CIP1), KMT5A and SDE2. CDT1 degradation in response to DNA damage is necessary to ensure proper cell cycle regulation of DNA replication. CDKN1A/p21(CIP1) degradation during S phase or following UV irradiation is essential to control replication licensing. KMT5A degradation is also important for a proper regulation of mechanisms such as TGF-beta signaling, cell cycle progression, DNA repair and cell migration. Most substrates require their interaction with PCNA for their polyubiquitination: substrates interact with PCNA via their PIP-box, and those containing the 'K+4' motif in the PIP box, recruit the DCX(DTL) complex, leading to their degradation. In undamaged proliferating cells, the DCX(DTL) complex also promotes the 'Lys-164' monoubiquitination of PCNA, thereby being involved in PCNA-dependent translesion DNA synthesis. May play a role in the regulation of the circadian clock. This Xenopus laevis (African clawed frog) protein is Denticleless protein homolog A (dtl-a).